The primary structure comprises 283 residues: Probable endonuclease 4 (283 aa).

9 residues coordinate Zn(2+): His69, His109, Glu144, Asp178, His181, His215, Asp228, His230, and Glu260.

It belongs to the AP endonuclease 2 family. It depends on Zn(2+) as a cofactor.

It carries out the reaction Endonucleolytic cleavage to 5'-phosphooligonucleotide end-products.. Functionally, endonuclease IV plays a role in DNA repair. It cleaves phosphodiester bonds at apurinic or apyrimidinic (AP) sites, generating a 3'-hydroxyl group and a 5'-terminal sugar phosphate. This is Probable endonuclease 4 from Thermosipho melanesiensis (strain DSM 12029 / CIP 104789 / BI429).